The primary structure comprises 442 residues: Inhibitor of Apoptosis OPG037 (442 aa).

ANK repeat units lie at residues Asp67 to Ala96, His100 to Asn131, Asp203 to Lys233, Phe237 to Asp267, Tyr292 to Asp321, and Met323 to Ser347.

This sequence belongs to the orthopoxvirus OPG037 family. As to quaternary structure, may interact with host caspase-9-Apaf-1 complex.

Its subcellular location is the host cytoplasm. Its function is as follows. Inhibits host apoptosis. Acts by associating with host apoptosome. The chain is Inhibitor of Apoptosis OPG037 (OPG037) from Monkeypox virus.